The following is a 367-amino-acid chain: Apolipoprotein A-V (367 aa).

Positions 1 to 20 (MAAVITWALALLSVFATVQA) are cleaved as a signal peptide. A Phosphoserine modification is found at serine 52. Residues 231–255 (TRKAKDLHTSIQRNLDQLRDELSTF) adopt a coiled-coil conformation. The tract at residues 305–332 (EEIQHQLAPPPPSHSAFAPELGHSDSNK) is disordered.

The protein belongs to the apolipoprotein A1/A4/E family. In terms of assembly, interacts with GPIHBP1. Interacts with SORL1; this interaction leads to APOA5 internalization and sorting either to lysosomes and degradation, or to the trans-Golgi network. In terms of processing, phosphorylated by FAM20C in the extracellular medium. In terms of tissue distribution, liver.

It is found in the secreted. The protein localises to the early endosome. Its subcellular location is the late endosome. It localises to the golgi apparatus. The protein resides in the trans-Golgi network. Functionally, minor apolipoprotein mainly associated with HDL and to a lesser extent with VLDL. May also be associated with chylomicrons. Important determinant of plasma triglyceride (TG) levels by both being a potent stimulator of apo-CII lipoprotein lipase (LPL) TG hydrolysis and an inhibitor of the hepatic VLDL-TG production rate (without affecting the VLDL-apoB production rate). Activates poorly lecithin:cholesterol acyltransferase (LCAT) and does not enhance efflux of cholesterol from macrophages. Binds heparin. The chain is Apolipoprotein A-V (Apoa5) from Rattus norvegicus (Rat).